The sequence spans 340 residues: Cobalt-precorrin-5B C(1)-methyltransferase (340 aa).

The protein belongs to the CbiD family.

It catalyses the reaction Co-precorrin-5B + S-adenosyl-L-methionine = Co-precorrin-6A + S-adenosyl-L-homocysteine. It functions in the pathway cofactor biosynthesis; adenosylcobalamin biosynthesis; cob(II)yrinate a,c-diamide from sirohydrochlorin (anaerobic route): step 6/10. Functionally, catalyzes the methylation of C-1 in cobalt-precorrin-5B to form cobalt-precorrin-6A. The polypeptide is Cobalt-precorrin-5B C(1)-methyltransferase (Pyrobaculum aerophilum (strain ATCC 51768 / DSM 7523 / JCM 9630 / CIP 104966 / NBRC 100827 / IM2)).